The following is a 256-amino-acid chain: Trypsin epsilon (256 aa).

The N-terminal stretch at Met-1–Gly-22 is a signal peptide. Residues Leu-23–Arg-30 constitute a propeptide, activation peptide. In terms of domain architecture, Peptidase S1 spans Ile-31–Arg-254. Cys-56 and Cys-72 form a disulfide bridge. Catalysis depends on charge relay system residues His-71 and Asp-116. 2 disulfide bridges follow: Cys-180-Cys-197 and Cys-206-Cys-230. Ser-210 serves as the catalytic Charge relay system.

It belongs to the peptidase S1 family.

The protein localises to the secreted. It is found in the extracellular space. It carries out the reaction Preferential cleavage: Arg-|-Xaa, Lys-|-Xaa.. The chain is Trypsin epsilon (epsilonTry) from Drosophila erecta (Fruit fly).